The primary structure comprises 103 residues: uncharacterized protein (103 aa).

A run of 3 helical transmembrane segments spans residues 12–34, 49–66, and 79–101; these read GFSW…LTIS, TLMS…ALIA, and FARG…VAGG.

It localises to the cell membrane. This is an uncharacterized protein from Pasteurella multocida (strain Pm70).